The following is a 199-amino-acid chain: B3 domain-containing protein Os06g0107800 (199 aa).

A disordered region spans residues 13–32 (QLQGGGGGHGGGGGGGGGER). The segment covering 15 to 29 (QGGGGGHGGGGGGGG) has biased composition (gly residues). A DNA-binding region (TF-B3) is located at residues 37 to 141 (FEKVVTPSDV…RLFIDCRKRA (105 aa)).

It is found in the nucleus. The polypeptide is B3 domain-containing protein Os06g0107800 (Oryza sativa subsp. japonica (Rice)).